The primary structure comprises 277 residues: Large ribosomal subunit protein uL2 (277 aa).

The tract at residues 222 to 265 (GVAMNPIDHPHGGGEGRTSGGRHPVTPWGKPTKGKKTRTNKSTD) is disordered.

Belongs to the universal ribosomal protein uL2 family. As to quaternary structure, part of the 50S ribosomal subunit. Forms a bridge to the 30S subunit in the 70S ribosome.

One of the primary rRNA binding proteins. Required for association of the 30S and 50S subunits to form the 70S ribosome, for tRNA binding and peptide bond formation. It has been suggested to have peptidyltransferase activity; this is somewhat controversial. Makes several contacts with the 16S rRNA in the 70S ribosome. The sequence is that of Large ribosomal subunit protein uL2 from Bradyrhizobium sp. (strain BTAi1 / ATCC BAA-1182).